The following is a 146-amino-acid chain: VHLTPEEKTAVTTLWGKVNVDEVGGEALGRLLVVYPWTQRFFESFGDLSSPDAVMGNPKVKAHGKKVLGAFSDGLAHLDNLKGTFAQLSELHCDKLHVDPENFKLLGNVLVCVLAHHFGKEFTPQVQAAYQKVVAGVANALAHKYH.

V1 is modified (N-acetylvaline). The region spanning 2 to 146 is the Globin domain; it reads HLTPEEKTAV…VANALAHKYH (145 aa). T12 bears the Phosphothreonine mark. A Phosphoserine modification is found at S44. K59 is modified (N6-acetyllysine). H63 provides a ligand contact to heme b. N6-acetyllysine is present on K82. Position 92 (H92) interacts with heme b. S-nitrosocysteine is present on C93. K144 is subject to N6-acetyllysine.

It belongs to the globin family. In terms of assembly, heterotetramer of two alpha chains and two beta chains. In terms of tissue distribution, red blood cells.

Functionally, involved in oxygen transport from the lung to the various peripheral tissues. The chain is Hemoglobin subunit beta (HBB) from Chlorocebus aethiops (Green monkey).